The following is a 295-amino-acid chain: Microcin B17-processing protein McbB (295 aa).

The protein resides in the cytoplasm. Its function is as follows. Necessary to process the inactive microcin B17 (McbA) precursor into the active peptide. This chain is Microcin B17-processing protein McbB (mcbB), found in Escherichia coli.